A 160-amino-acid chain; its full sequence is 2-C-methyl-D-erythritol 2,4-cyclodiphosphate synthase (160 aa).

A divalent metal cation is bound by residues Asp-11 and His-13. 4-CDP-2-C-methyl-D-erythritol 2-phosphate-binding positions include 11–13 and 37–38; these read DVH and HS. An a divalent metal cation-binding site is contributed by His-45. Residues 59-61 and Arg-145 contribute to the 4-CDP-2-C-methyl-D-erythritol 2-phosphate site; that span reads DIG.

The protein belongs to the IspF family. In terms of assembly, homotrimer. A divalent metal cation serves as cofactor.

It catalyses the reaction 4-CDP-2-C-methyl-D-erythritol 2-phosphate = 2-C-methyl-D-erythritol 2,4-cyclic diphosphate + CMP. It functions in the pathway isoprenoid biosynthesis; isopentenyl diphosphate biosynthesis via DXP pathway; isopentenyl diphosphate from 1-deoxy-D-xylulose 5-phosphate: step 4/6. Functionally, involved in the biosynthesis of isopentenyl diphosphate (IPP) and dimethylallyl diphosphate (DMAPP), two major building blocks of isoprenoid compounds. Catalyzes the conversion of 4-diphosphocytidyl-2-C-methyl-D-erythritol 2-phosphate (CDP-ME2P) to 2-C-methyl-D-erythritol 2,4-cyclodiphosphate (ME-CPP) with a corresponding release of cytidine 5-monophosphate (CMP). The chain is 2-C-methyl-D-erythritol 2,4-cyclodiphosphate synthase from Neisseria gonorrhoeae (strain ATCC 700825 / FA 1090).